A 264-amino-acid chain; its full sequence is 3-methyl-2-oxobutanoate hydroxymethyltransferase (264 aa).

Mg(2+) is bound by residues D45 and D84. 3-methyl-2-oxobutanoate contacts are provided by residues 45–46 (DS), D84, and K112. Mg(2+) is bound at residue E114. Residue E181 is the Proton acceptor of the active site.

It belongs to the PanB family. As to quaternary structure, homodecamer; pentamer of dimers. The cofactor is Mg(2+).

Its subcellular location is the cytoplasm. The enzyme catalyses 3-methyl-2-oxobutanoate + (6R)-5,10-methylene-5,6,7,8-tetrahydrofolate + H2O = 2-dehydropantoate + (6S)-5,6,7,8-tetrahydrofolate. It functions in the pathway cofactor biosynthesis; (R)-pantothenate biosynthesis; (R)-pantoate from 3-methyl-2-oxobutanoate: step 1/2. In terms of biological role, catalyzes the reversible reaction in which hydroxymethyl group from 5,10-methylenetetrahydrofolate is transferred onto alpha-ketoisovalerate to form ketopantoate. In Vibrio vulnificus (strain YJ016), this protein is 3-methyl-2-oxobutanoate hydroxymethyltransferase.